The chain runs to 376 residues: Chaperone protein DnaJ (376 aa).

Residues 5–70 enclose the J domain; sequence DFYEVLGVER…SKRAAYDQYG (66 aa). Residues 135-213 form a CR-type zinc finger; that stretch reads GTTVTIRVPT…CHGQGRVEEQ (79 aa). Zn(2+)-binding residues include Cys-148, Cys-151, Cys-165, Cys-168, Cys-187, Cys-190, Cys-201, and Cys-204. 4 CXXCXGXG motif repeats span residues 148–155, 165–172, 187–194, and 201–208; these read CKTCDGSG, CTTCGGIG, CPRCHGSG, and CGSCHGQG.

The protein belongs to the DnaJ family. In terms of assembly, homodimer. The cofactor is Zn(2+).

It localises to the cytoplasm. Functionally, participates actively in the response to hyperosmotic and heat shock by preventing the aggregation of stress-denatured proteins and by disaggregating proteins, also in an autonomous, DnaK-independent fashion. Unfolded proteins bind initially to DnaJ; upon interaction with the DnaJ-bound protein, DnaK hydrolyzes its bound ATP, resulting in the formation of a stable complex. GrpE releases ADP from DnaK; ATP binding to DnaK triggers the release of the substrate protein, thus completing the reaction cycle. Several rounds of ATP-dependent interactions between DnaJ, DnaK and GrpE are required for fully efficient folding. Also involved, together with DnaK and GrpE, in the DNA replication of plasmids through activation of initiation proteins. The polypeptide is Chaperone protein DnaJ (Stutzerimonas stutzeri (Pseudomonas stutzeri)).